The following is a 492-amino-acid chain: Linolenate hydroperoxide lyase, chloroplastic (492 aa).

Residues 1-33 (MLLRTMAATSPRPPPSTSLTSQQPPSPPSQLPL) are disordered. The transit peptide at 1–34 (MLLRTMAATSPRPPPSTSLTSQQPPSPPSQLPLR) directs the protein to the chloroplast. Cys454 provides a ligand contact to heme.

The protein belongs to the cytochrome P450 family. Requires heme as cofactor. As to expression, expressed in roots, leaves, flowers and siliques.

The protein resides in the plastid. The protein localises to the chloroplast. Catalyzes the conversion of (9Z,11E,15Z)-(13S)-hydroperoxyoctadeca-9,11,15-trienoate to (9Z)-12-oxo-dodec-9-enoate and cis-3-hexenal. Possesses low activity toward (9Z,11E)-(13S)-13-hydroperoxyoctadeca-9,11-dienoate. Required for the synthesis of the green leaf volatiles (GLVs) hexanal and trans-2-hexenal. This Arabidopsis thaliana (Mouse-ear cress) protein is Linolenate hydroperoxide lyase, chloroplastic.